The following is a 273-amino-acid chain: Phosphate import ATP-binding protein PstB (273 aa).

In terms of domain architecture, ABC transporter spans 27 to 268 (VTVRDLNFYY…PSDRRTQDYI (242 aa)). Position 59–66 (59–66 (GPSGCGKS)) interacts with ATP.

Belongs to the ABC transporter superfamily. Phosphate importer (TC 3.A.1.7) family. As to quaternary structure, the complex is composed of two ATP-binding proteins (PstB), two transmembrane proteins (PstC and PstA) and a solute-binding protein (PstS).

The protein localises to the cell inner membrane. The catalysed reaction is phosphate(out) + ATP + H2O = ADP + 2 phosphate(in) + H(+). In terms of biological role, part of the ABC transporter complex PstSACB involved in phosphate import. Responsible for energy coupling to the transport system. This chain is Phosphate import ATP-binding protein PstB, found in Rhodopseudomonas palustris (strain ATCC BAA-98 / CGA009).